We begin with the raw amino-acid sequence, 358 residues long: Alanine racemase, biosynthetic (358 aa).

Lys34 serves as the catalytic Proton acceptor; specific for D-alanine. N6-(pyridoxal phosphate)lysine is present on Lys34. A substrate-binding site is contributed by Arg130. Catalysis depends on Tyr254, which acts as the Proton acceptor; specific for L-alanine. Met302 serves as a coordination point for substrate.

The protein belongs to the alanine racemase family. The cofactor is pyridoxal 5'-phosphate.

The catalysed reaction is L-alanine = D-alanine. It participates in amino-acid biosynthesis; D-alanine biosynthesis; D-alanine from L-alanine: step 1/1. The protein operates within cell wall biogenesis; peptidoglycan biosynthesis. Its function is as follows. Catalyzes the interconversion of L-alanine and D-alanine. Provides the D-alanine required for cell wall biosynthesis. The polypeptide is Alanine racemase, biosynthetic (alr) (Pseudomonas aeruginosa (strain ATCC 15692 / DSM 22644 / CIP 104116 / JCM 14847 / LMG 12228 / 1C / PRS 101 / PAO1)).